The sequence spans 646 residues: Mitochondrial distribution and morphology protein 10 (646 aa).

Disordered stretches follow at residues 206 to 230 (KSTS…SLSN) and 315 to 347 (ETSS…GGGL). Low complexity predominate over residues 207–230 (STSSSMDRLDSSNPSLSSSTSLSN). Residues 315-333 (ETSSSASYPQRNGSVLHTG) show a composition bias toward polar residues.

The protein belongs to the MDM10 family. Component of the ER-mitochondria encounter structure (ERMES) or MDM complex, composed of MMM1, MDM10, MDM12 and MDM34. Associates with the mitochondrial outer membrane sorting assembly machinery SAM(core) complex.

It localises to the mitochondrion outer membrane. Functionally, component of the ERMES/MDM complex, which serves as a molecular tether to connect the endoplasmic reticulum and mitochondria. Components of this complex are involved in the control of mitochondrial shape and protein biogenesis and may function in phospholipid exchange. MDM10 is involved in the late assembly steps of the general translocase of the mitochondrial outer membrane (TOM complex). Functions in the TOM40-specific route of the assembly of outer membrane beta-barrel proteins, including the association of TOM40 with the receptor TOM22 and small TOM proteins. Can associate with the SAM(core) complex as well as the MDM12-MMM1 complex, both involved in late steps of the major beta-barrel assembly pathway, that is responsible for biogenesis of all outer membrane beta-barrel proteins. May act as a switch that shuttles between both complexes and channels precursor proteins into the TOM40-specific pathway. Plays a role in mitochondrial morphology and in the inheritance of mitochondria. In Mycosarcoma maydis (Corn smut fungus), this protein is Mitochondrial distribution and morphology protein 10.